The following is a 106-amino-acid chain: UPF0060 membrane protein Bphy_5052 (106 aa).

Transmembrane regions (helical) follow at residues 4–24 (LLLY…PWRW), 30–50 (SVWL…LLTF), 58–78 (VYAA…WCVD), and 82–102 (PSAW…IIAF).

The protein belongs to the UPF0060 family.

Its subcellular location is the cell inner membrane. This chain is UPF0060 membrane protein Bphy_5052, found in Paraburkholderia phymatum (strain DSM 17167 / CIP 108236 / LMG 21445 / STM815) (Burkholderia phymatum).